The sequence spans 380 residues: Deoxyguanosinetriphosphate triphosphohydrolase-like protein (380 aa).

Residues 1–28 are disordered; that stretch reads MYAPYATMPDRSRGRAVPEEESSFRSPF. Residues 62 to 198 enclose the HD domain; it reads RLTHSIEVGQ…AALADDIAYN (137 aa).

Belongs to the dGTPase family. Type 2 subfamily.

The chain is Deoxyguanosinetriphosphate triphosphohydrolase-like protein from Ruegeria sp. (strain TM1040) (Silicibacter sp.).